A 236-amino-acid polypeptide reads, in one-letter code: 7-cyano-7-deazaguanine synthase (236 aa).

7–17 (CSGGLDSVSLA) serves as a coordination point for ATP. 4 residues coordinate Zn(2+): Cys-185, Cys-193, Cys-196, and Cys-199.

It belongs to the QueC family. Requires Zn(2+) as cofactor.

The catalysed reaction is 7-carboxy-7-deazaguanine + NH4(+) + ATP = 7-cyano-7-deazaguanine + ADP + phosphate + H2O + H(+). It participates in purine metabolism; 7-cyano-7-deazaguanine biosynthesis. Catalyzes the ATP-dependent conversion of 7-carboxy-7-deazaguanine (CDG) to 7-cyano-7-deazaguanine (preQ(0)). This is 7-cyano-7-deazaguanine synthase from Rhizobium leguminosarum bv. trifolii (strain WSM2304).